Here is a 1159-residue protein sequence, read N- to C-terminus: Phosphatidylinositol 3-kinase age-1 (1159 aa).

Residues 1-25 (MSMGRSSSTTFRNRTASHGSRSLGS) show a composition bias toward polar residues. The interval 1-28 (MSMGRSSSTTFRNRTASHGSRSLGSAET) is disordered. Residues 79–179 (SEGVADMIVL…FPMLFLFEPD (101 aa)) enclose the PI3K-ABD domain. The 92-residue stretch at 272-363 (RKSEANEVWE…YRCPGFVVRR (92 aa)) folds into the PI3K-RBD domain. In terms of domain architecture, C2 PI3K-type spans 430–588 (LDSNLMIRPV…VKMPNEAQYK (159 aa)). One can recognise a PIK helical domain in the interval 607–793 (DYEACIGDPG…SLLMEAYLRG (187 aa)). One can recognise a PI3K/PI4K catalytic domain in the interval 858-1159 (VIEKAIVLGS…NWLFHAMKHY (302 aa)). Positions 864–870 (VLGSAKQ) are G-loop. The tract at residues 1028-1036 (GIKDRHSDN) is catalytic loop. The activation loop stretch occupies residues 1047-1073 (HIDFGHILGHGKTKLGIQRDRQPFILT).

The protein belongs to the PI3/PI4-kinase family.

It carries out the reaction a 1,2-diacyl-sn-glycero-3-phospho-(1D-myo-inositol) + ATP = a 1,2-diacyl-sn-glycero-3-phospho-(1D-myo-inositol-3-phosphate) + ADP + H(+). Functionally, phosphatidylinositol 3-kinase homolog that regulates longevity and diapause. Promotes cell survival during embryonic development by recruiting akt-1/2 to the plasma membrane through the production of PtdIns(3,4,5)P3. Could function in the development or neuroendocrine signaling of the dauer pathway. Mediates susceptibility to enteropathogenic E.coli infection. May negatively regulate AYI interneuron neurite outgrowth. Plays a role in aversive olfactory learning when an odor is associated with food deprivation. Regulates this process by promoting the nuclear relocalization of egl-4 in AWC olfactory neurons after odor conditioning. This chain is Phosphatidylinositol 3-kinase age-1 (age-1), found in Caenorhabditis briggsae.